Here is a 106-residue protein sequence, read N- to C-terminus: Trp operon repressor homolog (106 aa).

Residues Gln-59–Ile-82 mediate DNA binding.

This sequence belongs to the TrpR family. As to quaternary structure, homodimer.

It localises to the cytoplasm. In terms of biological role, this protein is an aporepressor. When complexed with L-tryptophan it binds the operator region of the trp operon and prevents the initiation of transcription. The polypeptide is Trp operon repressor homolog (Histophilus somni (strain 129Pt) (Haemophilus somnus)).